The chain runs to 189 residues: dCTP deaminase (189 aa).

Residues 112 to 117, 136 to 138, Gln157, Tyr171, and Gln181 each bind dCTP; these read KSTYAR and TLE. Glu138 acts as the Proton donor/acceptor in catalysis.

Belongs to the dCTP deaminase family. Homotrimer.

It catalyses the reaction dCTP + H2O + H(+) = dUTP + NH4(+). The protein operates within pyrimidine metabolism; dUMP biosynthesis; dUMP from dCTP (dUTP route): step 1/2. Catalyzes the deamination of dCTP to dUTP. The protein is dCTP deaminase of Nitrosospira multiformis (strain ATCC 25196 / NCIMB 11849 / C 71).